Consider the following 362-residue polypeptide: Phosphoserine aminotransferase (362 aa).

2 residues coordinate L-glutamate: Ser9 and Arg42. Residues 76 to 77 (GR), Trp102, Thr153, Asp174, and Gln197 each bind pyridoxal 5'-phosphate. Lys198 bears the N6-(pyridoxal phosphate)lysine mark. 239 to 240 (NT) lines the pyridoxal 5'-phosphate pocket.

This sequence belongs to the class-V pyridoxal-phosphate-dependent aminotransferase family. SerC subfamily. As to quaternary structure, homodimer. It depends on pyridoxal 5'-phosphate as a cofactor.

The protein localises to the cytoplasm. It catalyses the reaction O-phospho-L-serine + 2-oxoglutarate = 3-phosphooxypyruvate + L-glutamate. The enzyme catalyses 4-(phosphooxy)-L-threonine + 2-oxoglutarate = (R)-3-hydroxy-2-oxo-4-phosphooxybutanoate + L-glutamate. Its pathway is amino-acid biosynthesis; L-serine biosynthesis; L-serine from 3-phospho-D-glycerate: step 2/3. The protein operates within cofactor biosynthesis; pyridoxine 5'-phosphate biosynthesis; pyridoxine 5'-phosphate from D-erythrose 4-phosphate: step 3/5. Functionally, catalyzes the reversible conversion of 3-phosphohydroxypyruvate to phosphoserine and of 3-hydroxy-2-oxo-4-phosphonooxybutanoate to phosphohydroxythreonine. This Escherichia coli O139:H28 (strain E24377A / ETEC) protein is Phosphoserine aminotransferase.